Here is a 327-residue protein sequence, read N- to C-terminus: Leucotoxin LukD (327 aa).

An N-terminal signal peptide occupies residues 1-26; it reads MKIEKLGKSSVASSIALLLLSNTVDA.

The protein belongs to the aerolysin family. As to quaternary structure, toxicity requires sequential binding and synergistic association of a class S and a class F component which form heterooligomeric complexes. LukE (class S) associates with LukD (class F). LukD can also associate with HlgA.

It is found in the secreted. Its function is as follows. Part of a bi-component leucotoxin that acts by forming pores in the membrane of the target cells. LukE-LukD is as effective as the Panton-Valentine leucocidin (PVL) for inducing dermonecrosis when injected in the rabbit skin, but not hemolytic and poorly leucotoxic on human blood cells compared to other leucotoxins expressed by S.aureus. HlgA-LukD is a Ca(2+) channel inducer. This Staphylococcus aureus protein is Leucotoxin LukD (lukD).